We begin with the raw amino-acid sequence, 293 residues long: Protease HtpX homolog (293 aa).

The next 2 membrane-spanning stretches (helical) occupy residues 7-26 (ASLL…ALLG) and 30-49 (GMVM…WYYS). Histidine 131 contacts Zn(2+). Residue glutamate 132 is part of the active site. Histidine 135 contacts Zn(2+). 2 consecutive transmembrane segments (helical) span residues 148–168 (ATLA…FWFF) and 180–200 (IGAL…QLGI). Position 205 (glutamate 205) interacts with Zn(2+).

Belongs to the peptidase M48B family. It depends on Zn(2+) as a cofactor.

It is found in the cell inner membrane. This chain is Protease HtpX homolog, found in Acaryochloris marina (strain MBIC 11017).